The chain runs to 309 residues: GTP cyclohydrolase FolE2 (309 aa).

The protein belongs to the GTP cyclohydrolase IV family.

It catalyses the reaction GTP + H2O = 7,8-dihydroneopterin 3'-triphosphate + formate + H(+). It functions in the pathway cofactor biosynthesis; 7,8-dihydroneopterin triphosphate biosynthesis; 7,8-dihydroneopterin triphosphate from GTP: step 1/1. Converts GTP to 7,8-dihydroneopterin triphosphate. In Serratia proteamaculans (strain 568), this protein is GTP cyclohydrolase FolE2.